Reading from the N-terminus, the 150-residue chain is Deoxyuridine 5'-triphosphate nucleotidohydrolase (150 aa).

Substrate-binding positions include 68–70, N81, 85–87, and K95; these read RSG and TID.

The protein belongs to the dUTPase family. Mg(2+) is required as a cofactor.

The enzyme catalyses dUTP + H2O = dUMP + diphosphate + H(+). The protein operates within pyrimidine metabolism; dUMP biosynthesis; dUMP from dCTP (dUTP route): step 2/2. This enzyme is involved in nucleotide metabolism: it produces dUMP, the immediate precursor of thymidine nucleotides and it decreases the intracellular concentration of dUTP so that uracil cannot be incorporated into DNA. This Rickettsia bellii (strain OSU 85-389) protein is Deoxyuridine 5'-triphosphate nucleotidohydrolase.